A 143-amino-acid polypeptide reads, in one-letter code: Large ribosomal subunit protein uL15 (143 aa).

Residues 1-47 (MKLHELTPSEGSRFSRRRIGRGDSSGQGKTSGRGQKGQKARGKVRVG) are disordered. Residues 23-35 (DSSGQGKTSGRGQ) show a composition bias toward gly residues.

This sequence belongs to the universal ribosomal protein uL15 family. In terms of assembly, part of the 50S ribosomal subunit.

In terms of biological role, binds to the 23S rRNA. The protein is Large ribosomal subunit protein uL15 of Lactiplantibacillus plantarum (strain ATCC BAA-793 / NCIMB 8826 / WCFS1) (Lactobacillus plantarum).